A 250-amino-acid polypeptide reads, in one-letter code: ATP synthase subunit a (250 aa).

6 helical membrane-spanning segments follow: residues 26 to 46, 84 to 104, 114 to 134, 143 to 163, 193 to 213, and 216 to 236; these read FTNA…FLYL, FFPM…LGMV, IIVT…YGFY, LFVP…IEII, FVAS…LPLI, and VALT…FAVL.

It belongs to the ATPase A chain family. As to quaternary structure, F-type ATPases have 2 components, CF(1) - the catalytic core - and CF(0) - the membrane proton channel. CF(1) has five subunits: alpha(3), beta(3), gamma(1), delta(1), epsilon(1). CF(0) has three main subunits: a(1), b(2) and c(9-12). The alpha and beta chains form an alternating ring which encloses part of the gamma chain. CF(1) is attached to CF(0) by a central stalk formed by the gamma and epsilon chains, while a peripheral stalk is formed by the delta and b chains.

Its subcellular location is the cell inner membrane. Its function is as follows. Key component of the proton channel; it plays a direct role in the translocation of protons across the membrane. The protein is ATP synthase subunit a of Sinorhizobium medicae (strain WSM419) (Ensifer medicae).